A 341-amino-acid polypeptide reads, in one-letter code: Heat-inducible transcription repressor HrcA (341 aa).

It belongs to the HrcA family.

Negative regulator of class I heat shock genes (grpE-dnaK-dnaJ and groELS operons). Prevents heat-shock induction of these operons. The chain is Heat-inducible transcription repressor HrcA from Symbiobacterium thermophilum (strain DSM 24528 / JCM 14929 / IAM 14863 / T).